A 261-amino-acid polypeptide reads, in one-letter code: Thioesterase AMT4 (261 aa).

The protein belongs to the AMT4 thioesterase family.

It participates in mycotoxin biosynthesis. Functionally, thioesterase; part of the gene clusters that mediate the biosynthesis of AM-toxins, host-selective toxins (HSTs) causing Alternaria blotch on apple, a worldwide distributed disease. AM-toxins are cyclic depsipeptides containing the 3 residues 2-hydroxy-isovaleric acid (2-HIV), dehydroalanine, L-alanine which are common for all 3 AM-toxins I to III. The fourth precursor is L-alpha-amino-methoxyphenyl-valeric acid (L-Amv) for AM-toxin I, L-alpha-amino-phenyl-valeric acid (L-Apv) for AM-toxin II, and L-alpha-amino-hydroxyphenyl-valeric acid (L-Ahv) for AM-toxin III. AM-toxins have two target sites for affecting susceptible apple cells; they cause invagination of the plasma membrane and electrolyte loss and chloroplast disorganization. The non-ribosomal peptide synthetase AMT1 contains 4 catalytic modules and is responsible for activation of each residue in AM-toxin. The aldo-keto reductase AMT2 catalyzes the conversion of 2-keto-isovaleric acid (2-KIV) to 2-hydroxy-isovaleric acid (2-HIV), one of the precursor residues incorporated by AMT1 during AM-toxin biosynthesis, by reduction of its ketone to an alcohol. The cytochrome P450 monooxygenase AMT3 and the thioesterase AMT4 are also important for AM-toxin production, but their exact function within the AM-toxin biosynthesis are not known yet. Up to 21 proteins (including AMT1 to AMT4) are predicted to be involved in AM-toxin biosynthesis since their expression ishighly up-regulated in AM-toxin-producing cultures. This chain is Thioesterase AMT4, found in Alternaria alternata (Alternaria rot fungus).